Here is a 304-residue protein sequence, read N- to C-terminus: Probable 5-dehydro-4-deoxyglucarate dehydratase (304 aa).

Belongs to the DapA family.

The enzyme catalyses 5-dehydro-4-deoxy-D-glucarate + H(+) = 2,5-dioxopentanoate + CO2 + H2O. Its pathway is carbohydrate acid metabolism; D-glucarate degradation; 2,5-dioxopentanoate from D-glucarate: step 2/2. This Arthrobacter sp. (strain FB24) protein is Probable 5-dehydro-4-deoxyglucarate dehydratase.